A 439-amino-acid chain; its full sequence is Agmatine coumaroyltransferase-1 (439 aa).

Active-site proton acceptor residues include H152 and D385.

The protein belongs to the plant acyltransferase family. Monomer.

The enzyme catalyses 4-coumaroyl-CoA + agmatine = N-(4-guanidinobutyl)-4-hydroxycinnamamide + CoA + H(+). Inhibited by DEPC. Completely inhibited by ZnSO(4), strongly inhibited by CuSO(4), partially inhibited by MnCl(2). Unaffected by MgCl(2) or CaCl(2). Its function is as follows. Involved in the synthesis of hordatines (antifungal hydroxycinnamoylagmatine derivatives). Specific for agmatine as the acyl acceptor, inactive towards tyramine and putrescine. Has activity with the acyl donors 4-coumaroyl-CoA, cinnamoyl-CoA, caffeoyl-CoA, feruloyl-CoA, and to a lesser extent sinapoyl-CoA. This chain is Agmatine coumaroyltransferase-1 (ACT-1), found in Hordeum vulgare (Barley).